The chain runs to 945 residues: UvrABC system protein A (945 aa).

Residue 31-38 (GLSGSGKS) participates in ATP binding. A C4-type zinc finger spans residues 254–281 (CPVCGHSISELEPKLFSFNNPAGACPTC). 2 consecutive ABC transporter domains span residues 310 to 587 (WDRR…PDSL) and 607 to 937 (RDKK…HFLK). Residue 640–647 (GVSGSGKS) coordinates ATP. A C4-type zinc finger spans residues 740–766 (CEACQGDGVIKVEMHFLPDIYVPCDVC).

The protein belongs to the ABC transporter superfamily. UvrA family. In terms of assembly, forms a heterotetramer with UvrB during the search for lesions.

Its subcellular location is the cytoplasm. In terms of biological role, the UvrABC repair system catalyzes the recognition and processing of DNA lesions. UvrA is an ATPase and a DNA-binding protein. A damage recognition complex composed of 2 UvrA and 2 UvrB subunits scans DNA for abnormalities. When the presence of a lesion has been verified by UvrB, the UvrA molecules dissociate. This Pseudomonas aeruginosa (strain ATCC 15692 / DSM 22644 / CIP 104116 / JCM 14847 / LMG 12228 / 1C / PRS 101 / PAO1) protein is UvrABC system protein A.